Here is an 818-residue protein sequence, read N- to C-terminus: Actin filament-associated protein 1-like 2 (818 aa).

At Tyr56 the chain carries Phosphotyrosine. Residues 66–163 form a disordered region; that stretch reads QNAESQGKAP…SKGKSAPYQW (98 aa). Polar residues predominate over residues 85–94; that stretch reads EPSQHSSAPQ. Residues 123–139 are compositionally biased toward acidic residues; sequence YYEEAEPYDTSLNEDGE. PH domains are found at residues 175-271 and 353-447; these read DARI…EVSG and SLET…SESG. Phosphoserine is present on Ser408. Tyr413 carries the phosphotyrosine modification. At Ser484 the chain carries Phosphoserine. The interval 513–532 is disordered; the sequence is AAVEPTEEATPVADDPNERE. The stretch at 652–749 forms a coiled coil; that stretch reads AEIKLGKNRT…VKDNLKKAEA (98 aa). The disordered stretch occupies residues 765–787; it reads NVSPRPKAVTPASAPDCTPVNSA.

Interacts with SRC. Interacts with LCK when tyrosine phosphorylated. Post-translationally, tyrosine phosphorylated (by SRC). In terms of tissue distribution, detected in spleen and thyroid, and at lower levels in kidney, brain, lung and pancreas.

The protein localises to the cytoplasm. Its function is as follows. May play a role in a signaling cascade by enhancing the kinase activity of SRC. Contributes to SRC-regulated transcription activation. This Homo sapiens (Human) protein is Actin filament-associated protein 1-like 2 (AFAP1L2).